Here is a 168-residue protein sequence, read N- to C-terminus: Group 2 truncated hemoglobin 3-1 (168 aa).

His98 is a heme b binding site.

The protein belongs to the truncated hemoglobin family. Group II subfamily. Homodimer when ferric. In terms of tissue distribution, mainly expressed in root nodules, but barely in leaves, roots, stems, flowers and fruits.

In terms of biological role, hemoglobin-like protein that exhibits an unusual concentration-independent binding of O(2) and CO. Required for general plant development and during nodulation. May promote shoot organogenesis from root explants. The chain is Group 2 truncated hemoglobin 3-1 from Lotus japonicus (Lotus corniculatus var. japonicus).